The sequence spans 616 residues: MAU2 chromatid cohesion factor homolog (616 aa).

TPR repeat units lie at residues 90–123 (FDTA…SQHN), 445–478 (GSFY…ANAE), and 485–518 (SCSL…ASKI).

Belongs to the SCC4/mau-2 family. In terms of assembly, component of the cohesin loading complex.

It is found in the nucleus. The protein localises to the nucleoplasm. Required for association of the cohesin complex with chromatin during interphase. Plays a role in sister chromatid cohesion and normal progression through prometaphase. The chain is MAU2 chromatid cohesion factor homolog from Culex quinquefasciatus (Southern house mosquito).